Reading from the N-terminus, the 405-residue chain is MCSIGEDDVGDEGATHAMVAESLPTGIVISPGDCNKCGVVSSELYKLNFRVAECRDCFLNHARHKFRASLGAAKVLPRNAEVLLAVDGSAESLVLLDMLHFAQTQNTFRRLHCNARVVYIDDQSVHGGESMNLQALQALGTRYEPLEFYVVELGASACSLQRLGQYSTSLKEPNGLNTKLEKLRSLTARQDYHQQQRKNLLASVAQKLSCSHVFEPSVSGDLATQLLTSIALGRGGSAALDVALLDDRLAAGVKLLRPLRDLNEQEVRFYVHACQLKPLRESGSSYGQERGQTASLQNLTAAFVGNLQQNYPATVSTVFRTGDKIAANAHMEQASCAQCQSPLDAKLSDTLLAIEYSRAVSEAGVGLSKDGDASESLAKQRLEFKDGLCHACRCIQLELGYDTLS.

The protein belongs to the CTU2/NCS2 family.

Its subcellular location is the cytoplasm. It participates in tRNA modification; 5-methoxycarbonylmethyl-2-thiouridine-tRNA biosynthesis. Plays a central role in 2-thiolation of mcm(5)S(2)U at tRNA wobble positions of tRNA(Lys), tRNA(Glu) and tRNA(Gln). May act by forming a heterodimer with NCS6/CTU1 that ligates sulfur from thiocarboxylated URM1 onto the uridine of tRNAs at wobble position. The polypeptide is Cytoplasmic tRNA 2-thiolation protein 2 (Drosophila persimilis (Fruit fly)).